Consider the following 103-residue polypeptide: uncharacterized protein (103 aa).

Over residues 1 to 10 (MVVKKSKPKN) the composition is skewed to basic residues. Disordered stretches follow at residues 1–38 (MVVK…KGKK) and 77–103 (AVFS…NEKK).

This is an uncharacterized protein from Schizosaccharomyces pombe (strain 972 / ATCC 24843) (Fission yeast).